The following is a 587-amino-acid chain: Aspartate--tRNA ligase (587 aa).

L-aspartate is bound at residue E173. An aspartate region spans residues 197–200 (QTLK). R219 is a binding site for L-aspartate. Residues 219-221 (RDE) and Q228 contribute to the ATP site. H446 is an L-aspartate binding site. E480 is an ATP binding site. R487 contacts L-aspartate. An ATP-binding site is contributed by 532-535 (GLDR).

Belongs to the class-II aminoacyl-tRNA synthetase family. Type 1 subfamily. In terms of assembly, homodimer.

Its subcellular location is the cytoplasm. The enzyme catalyses tRNA(Asp) + L-aspartate + ATP = L-aspartyl-tRNA(Asp) + AMP + diphosphate. Functionally, catalyzes the attachment of L-aspartate to tRNA(Asp) in a two-step reaction: L-aspartate is first activated by ATP to form Asp-AMP and then transferred to the acceptor end of tRNA(Asp). This chain is Aspartate--tRNA ligase, found in Phocaeicola vulgatus (strain ATCC 8482 / DSM 1447 / JCM 5826 / CCUG 4940 / NBRC 14291 / NCTC 11154) (Bacteroides vulgatus).